A 298-amino-acid polypeptide reads, in one-letter code: MGDTWAQLPWPGPPHSALLLVFFLLAAGVMHSDAGTSCPVLCTCRNQVVDCSNQRLFSVPPDLPMDTRNLSLAHNRIAAVPPGYLTCYMELRVLDLRNNSLMELPPGLFLHAKRLAHLDLSYNNLSHVPADMFREAHGLVHIDLSHNPWLRRVHPQAFQGLVHLRDLDLSYGGLAFLSLEALEGLPGLVTLQIGGNPWVCGCTMEPLLKWLRNRIQRCTADSQLAECRGPPEVEGAPLFSLTEESFKACHLTLTLDDYLFIAFVGFVVSIASVATNFLLGITANCCHRWSKANEEEEI.

The first 34 residues, 1 to 34, serve as a signal peptide directing secretion; it reads MGDTWAQLPWPGPPHSALLLVFFLLAAGVMHSDA. In terms of domain architecture, LRRNT spans 35-65; that stretch reads GTSCPVLCTCRNQVVDCSNQRLFSVPPDLPM. Disulfide bonds link Cys38–Cys44 and Cys42–Cys51. LRR repeat units follow at residues 66 to 87, 90 to 111, 114 to 135, 138 to 160, and 163 to 186; these read DTRN…YLTC, ELRV…LFLH, RLAH…MFRE, GLVH…AFQG, and HLRD…EGLP. The LRRCT domain maps to 196–251; it reads NPWVCGCTMEPLLKWLRNRIQRCTADSQLAECRGPPEVEGAPLFSLTEESFKACHL. Disulfide bonds link Cys200-Cys227 and Cys202-Cys249. Residues 259 to 279 traverse the membrane as a helical segment; the sequence is LFIAFVGFVVSIASVATNFLL.

Interacts with KCNMA1.

The protein resides in the cell membrane. Its function is as follows. Auxiliary protein of the large-conductance, voltage and calcium-activated potassium channel (BK alpha). Modulates gating properties by producing a marked shift in the BK channel's voltage dependence of activation in the hyperpolarizing direction, and in the absence of calcium. The chain is Leucine-rich repeat-containing protein 55 (Lrrc55) from Mus musculus (Mouse).